A 23-amino-acid polypeptide reads, in one-letter code: Keratin (23 aa).

Positions 1-23 constitute an IF rod domain; the sequence is YSSQLAQVQGLIGNVESQLAEIR. The interval 1–23 is coil 2; sequence YSSQLAQVQGLIGNVESQLAEIR.

This sequence belongs to the intermediate filament family.

The polypeptide is Keratin (Cervus elaphus (Red deer)).